Consider the following 709-residue polypeptide: Homeobox-leucine zipper protein TF1 (709 aa).

The segment at residues 66 to 125 (RKRRLQRLTGKQSEVLEGFFSICGHPDDGQKRHLSETTGLGLDQVKFWFQNKRTQVKTMC) is a DNA-binding region (homeobox). The stretch at 166 to 187 (NQLAVEMERLMGQSEWLQQEIA) forms a coiled coil. The 230-residue stretch at 212-441 (GQHDQQMIAE…MARQSARMRD (230 aa)) folds into the START domain.

It belongs to the HD-ZIP homeobox family. Class IV subfamily.

It localises to the nucleus. In terms of biological role, probable transcription factor. This is Homeobox-leucine zipper protein TF1 (TF1) from Oryza sativa subsp. japonica (Rice).